The sequence spans 449 residues: Dynein regulatory complex protein 10 (449 aa).

Positions 90 to 125 (AVREHEDLCQVLLENVRCLKEKERQLQEQKEAEEEG) form a coiled coil. The IQ domain occupies 400 to 429 (MVRAATLIQALWKGYLVRSLLRSKKKRGKG). A disordered region spans residues 422–449 (SKKKRGKGKAKDKEKGKQKGKEKGKGKK). Basic and acidic residues predominate over residues 430 to 449 (KAKDKEKGKQKGKEKGKGKK).

The protein belongs to the DRC10 family. Component of the nexin-dynein regulatory complex (N-DRC). Interacts with CFAP52.

The protein resides in the cytoplasm. It localises to the cytoskeleton. Its subcellular location is the flagellum axoneme. Functionally, component of the nexin-dynein regulatory complex (N-DRC), a key regulator of ciliary/flagellar motility which maintains the alignment and integrity of the distal axoneme and regulates microtubule sliding in motile axonemes. The protein is Dynein regulatory complex protein 10 (IQCD) of Homo sapiens (Human).